A 442-amino-acid chain; its full sequence is tRNA modification GTPase MnmE (442 aa).

3 residues coordinate (6S)-5-formyl-5,6,7,8-tetrahydrofolate: arginine 21, glutamate 79, and lysine 118. One can recognise a TrmE-type G domain in the interval 214–367; sequence GFKIAIVGKP…LKEELQNYLN (154 aa). Asparagine 224 lines the K(+) pocket. GTP is bound by residues 224 to 229, 243 to 249, and 268 to 271; these read NVGKSS, SDIAGTT, and DTAG. Serine 228 contributes to the Mg(2+) binding site. 3 residues coordinate K(+): serine 243, isoleucine 245, and threonine 248. Threonine 249 contacts Mg(2+). Position 442 (lysine 442) interacts with (6S)-5-formyl-5,6,7,8-tetrahydrofolate.

Belongs to the TRAFAC class TrmE-Era-EngA-EngB-Septin-like GTPase superfamily. TrmE GTPase family. In terms of assembly, homodimer. Heterotetramer of two MnmE and two MnmG subunits. The cofactor is K(+).

The protein localises to the cytoplasm. Exhibits a very high intrinsic GTPase hydrolysis rate. Involved in the addition of a carboxymethylaminomethyl (cmnm) group at the wobble position (U34) of certain tRNAs, forming tRNA-cmnm(5)s(2)U34. In Campylobacter jejuni (strain RM1221), this protein is tRNA modification GTPase MnmE.